The sequence spans 280 residues: Myelin proteolipid protein B (280 aa).

Residues 1-10 (MGWHDGCIRC) are Cytoplasmic-facing. S-palmitoyl cysteine attachment occurs at residues Cys7 and Cys10. Residues 11–36 (MVGVPFASVIATVLCFAGVALFCGCG) traverse the membrane as a helical segment. The Extracellular segment spans residues 37 to 59 (HEALSGTEKLIETYFSKNYQEYE). A helical membrane pass occupies residues 60 to 88 (YLIHVINAFQYVIYGIAIFFFLYGILLLA). The Cytoplasmic portion of the chain corresponds to 89-152 (EGFYTTTAIK…LGKWLGHPDK (64 aa)). S-palmitoyl cysteine attachment occurs at residues Cys140 and Cys142. The chain crosses the membrane as a helical span at residues 153-179 (FVGVTYVITILWILIFACSAVPVYIYF). The Extracellular segment spans residues 180–239 (NTWVTCQSIAFPGKTTTSVSTLCLDARMYGVLPWNAFPGKVCGTSLLAICKTSEFQMTFH). Intrachain disulfides connect Cys185–Cys229 and Cys202–Cys221. A helical transmembrane segment spans residues 240-269 (LFIAAFVGAAATLVALLTYMVGASFNYAVL). The Cytoplasmic segment spans residues 270–280 (RVTGRSDRSKF).

This sequence belongs to the myelin proteolipid protein family.

It localises to the cell membrane. This is the major myelin protein from the central nervous system. It plays an important role in the formation or maintenance of the multilamellar structure of myelin. This chain is Myelin proteolipid protein B (plp1-b), found in Xenopus laevis (African clawed frog).